Consider the following 129-residue polypeptide: UPF0325 protein ESA_03178 (129 aa).

This sequence belongs to the UPF0325 family.

In Cronobacter sakazakii (strain ATCC BAA-894) (Enterobacter sakazakii), this protein is UPF0325 protein ESA_03178.